Here is a 299-residue protein sequence, read N- to C-terminus: Ciliary microtubule inner protein 2B (299 aa).

The protein belongs to the CIMIP2 family. Expressed in airway epithelial cells.

It localises to the cytoplasm. The protein resides in the cytoskeleton. The protein localises to the cilium axoneme. Functionally, microtubule inner protein (MIP) part of the dynein-decorated doublet microtubules (DMTs) in cilia axoneme, which is required for motile cilia beating. The chain is Ciliary microtubule inner protein 2B (cimip2b) from Danio rerio (Zebrafish).